The chain runs to 551 residues: Cytochrome c lysine N-methyltransferase 1 (551 aa).

An SET domain is found at 46-273 (DKIELLRVSS…PNTEVLITYK (228 aa)). Positions 184–288 (IELLRQIYSA…LAMITKYGFD (105 aa)) are SET-like.

It belongs to the class V-like SAM-binding methyltransferase superfamily.

It localises to the cytoplasm. The protein localises to the cytosol. It carries out the reaction L-lysyl-[cytochrome c] + S-adenosyl-L-methionine = N(6)-methyl-L-lysyl-[cytochrome c] + S-adenosyl-L-homocysteine + H(+). Methyltransferase which mediates trimethylation of cytochrome c (CYC1). The sequence is that of Cytochrome c lysine N-methyltransferase 1 (CTM1) from Candida glabrata (strain ATCC 2001 / BCRC 20586 / JCM 3761 / NBRC 0622 / NRRL Y-65 / CBS 138) (Yeast).